The primary structure comprises 537 residues: MATTSGPAGIAMGSVGSLLERQDFSPEELRAALAGSRGSRQPDGLLRKGLGQREFFSYLHLPKKDGKTTKRAPRNEPDYATLYYREHPRAGDFSKTSLPERGRFDKCRIRPSVFKPPVGSGKGFLSMQSLAAHKGQKLWRSNGSLHTLACHPPLSPGPRASQARAQLLHALSLDEGGPEPSLSDSSSGGSFGRSPGTGPSPFSSSLGHINHLGGSLDRAPRSPKESGPLAVLSCLPEPPPPYEFSCPTTEEVAVLPEAREELKRDLGDQDVSNSFTQVLEERQRLWLSELKRLYVERLHEVAQKAERSERNLQLQLFMAQQEQRRLRKELRAQQGLAPEPRTSGSSMEADPNARPEEEARWEVCQKTAEISLLKQQLREAQAELAQKLAEIFSLKTQLRGSRAQAQAQDAELARLREAVHSLQEQAPREEAPGSCETDDCKSRGLLGEAGGSEAREGAEQLRAELLQERLRGQEQALRFEQERQTWQEEKERVLRYQREIQGSYMDMYRRNQALEHELRLLREPPTSWSPRLESSKI.

A Phosphoserine modification is found at Ser172. Disordered stretches follow at residues 173 to 234, 328 to 361, and 423 to 458; these read LDEG…VLSC, KELR…EARW, and QEQA…REGA. Residues 178–207 show a composition bias toward low complexity; the sequence is PEPSLSDSSSGGSFGRSPGTGPSPFSSSLG. Residues 295 to 501 adopt a coiled-coil conformation; sequence VERLHEVAQK…RVLRYQREIQ (207 aa). A compositionally biased stretch (basic and acidic residues) spans 351-361; it reads PNARPEEEARW.

Belongs to the N4BP3 family. In terms of assembly, binds NEDD4. Interacts with 14-3-3 proteins. Interacts with MAVS.

The protein localises to the cytoplasmic vesicle. The protein resides in the cell projection. It localises to the axon. Its subcellular location is the dendrite. Its function is as follows. Plays a positive role in the antiviral innate immune signaling pathway. Mechanistically, interacts with MAVS and functions as a positive regulator to promote 'Lys-63'-linked polyubiquitination of MAVS and thus strengthens the interaction between MAVS and TRAF2. Also plays a role in axon and dendrite arborization during cranial nerve development. May also be important for neural crest migration and early development of other anterior structures including eye, brain and cranial cartilage. This is NEDD4-binding protein 3 (N4bp3) from Mus musculus (Mouse).